The primary structure comprises 372 residues: N-methyl-L-tryptophan oxidase (372 aa).

Residue D4–H34 participates in FAD binding. C308 is modified (S-8alpha-FAD cysteine).

The protein belongs to the MSOX/MTOX family. MTOX subfamily. Monomer. Requires FAD as cofactor.

It carries out the reaction N(alpha)-methyl-L-tryptophan + O2 + H2O = L-tryptophan + formaldehyde + H2O2. Functionally, catalyzes the oxidative demethylation of N-methyl-L-tryptophan. In Escherichia coli O139:H28 (strain E24377A / ETEC), this protein is N-methyl-L-tryptophan oxidase.